Reading from the N-terminus, the 701-residue chain is MNPIVKSFEYGQHTVTLETGVIARQADAAVLASMGDTTVLVTVVGKKAEEPGRDFFPLTVNYQEKTYAAGKIPGGFFKREGRPSESETLIARLIDRPIRPLFPNGFKNEVQVIITVVSVDPEINPDIISMIGTSAALAISGLPFNGPLGVARVGYTNGEYVLNPDVTQLVDSELDLVVAGTEGAVLMVESEAASLPEEVMLGGVVYGHEQQQVVINAISELKAEASKPAWDWTAPVQDQELVAKIKDLAEAGLTEAYQIEVKQDRYTQVGVIKSAAKEALLAENPEADLREIDGLLGSLEKKVVRSRIIAGNPRIDGREPDMVRALNVMAGVLPRTHGSSLFTRGETQALVTCTLGTERDAQKVDSIMGEYTNRFMLHYNFPPYSVGETGFVGSPKRREIGHGKLAWRGINAVMPSAEEFPYSVRVVSEITESNGSSSMASVCGTSLALMDAGVPIKTSVAGIAMGLVKEGDDFVVLSDILGDEDHLGDMDFKVAGTRDGITALQMDIKIEGITKDIMQIALQQAYGARVHILNVMDQAIGSHREDISDHAPRITTLKINPEKIRDVIGKGGATIRALTEETGTTIELEDDGTVKIASSNGEATKEAIRRIEEITAEVEVGTVYNGKVVRIVDFGAFVTILPGKDGLVHISQIAEERVANVSDYLEVGQEVKVKVMEVDRQGRVRLSMKEAAPKAEAPAAE.

Positions 485 and 491 each coordinate Mg(2+). The region spanning 552 to 611 is the KH domain; it reads PRITTLKINPEKIRDVIGKGGATIRALTEETGTTIELEDDGTVKIASSNGEATKEAIRRI. Positions 621-689 constitute an S1 motif domain; that stretch reads GTVYNGKVVR…RQGRVRLSMK (69 aa).

This sequence belongs to the polyribonucleotide nucleotidyltransferase family. In terms of assembly, component of the RNA degradosome, which is a multiprotein complex involved in RNA processing and mRNA degradation. The cofactor is Mg(2+).

Its subcellular location is the cytoplasm. It carries out the reaction RNA(n+1) + phosphate = RNA(n) + a ribonucleoside 5'-diphosphate. Its function is as follows. Involved in mRNA degradation. Catalyzes the phosphorolysis of single-stranded polyribonucleotides processively in the 3'- to 5'-direction. This Shewanella piezotolerans (strain WP3 / JCM 13877) protein is Polyribonucleotide nucleotidyltransferase.